Reading from the N-terminus, the 72-residue chain is Disintegrin cereberin (72 aa).

The Disintegrin domain maps to 1–72 (EAGEECDCGS…SADCPRNRFH (72 aa)). Intrachain disulfides connect Cys6/Cys21, Cys8/Cys16, Cys15/Cys38, Cys29/Cys35, Cys34/Cys59, and Cys47/Cys66. Residues 51-53 (RGD) carry the Cell attachment site motif. Residues 51–72 (RGDNPDDRCTGQSADCPRNRFH) are disordered.

This sequence belongs to the venom metalloproteinase (M12B) family. P-II subfamily. P-IIa sub-subfamily. As to quaternary structure, monomer (disintegrin). In terms of tissue distribution, expressed by the venom gland.

The protein resides in the secreted. Its function is as follows. Inhibits fibrinogen interaction with platelet. Acts by binding to alpha-IIb/beta-3 (ITGA2B/ITGB3) on the platelet surface and inhibits aggregation induced by ADP, thrombin, platelet-activating factor and collagen. The sequence is that of Disintegrin cereberin from Crotalus cerberus (Arizona black rattlesnake).